A 167-amino-acid chain; its full sequence is Ubiquitin-fold modifier-conjugating enzyme 1 (167 aa).

Catalysis depends on C116, which acts as the Glycyl thioester intermediate. Residue K122 forms a Glycyl lysine isopeptide (Lys-Gly) (interchain with G-Cter in UFM1) linkage.

Belongs to the ubiquitin-conjugating enzyme family. UFC1 subfamily. Interacts with UBA5 (via C-terminus). Interacts with UFL1. Interacts with UFM1. Interacts with KIRREL3. Post-translationally, ufmylated at Lys-122. Deufmylated by UFSP1.

Functionally, E2-like enzyme which specifically catalyzes the second step in ufmylation. Accepts the ubiquitin-like modifier UFM1 from the E1 enzyme UBA5 and forms an intermediate with UFM1 via a thioester linkage. Ufmylation is involved in various processes, such as ribosome recycling, response to DNA damage, interferon response or reticulophagy (also called ER-phagy). This Bos taurus (Bovine) protein is Ubiquitin-fold modifier-conjugating enzyme 1.